Reading from the N-terminus, the 699-residue chain is Keratinocyte proline-rich protein (699 aa).

Residue S436 is modified to Phosphoserine. 2 stretches are compositionally biased toward pro residues: residues P448 to E477 and D513 to E533. The interval P448–E533 is disordered.

As to expression, expressed in the stratified squamous epithelial layers of the skin, esophagus and tongue.

It is found in the cytoplasm. This is Keratinocyte proline-rich protein (Kprp) from Rattus norvegicus (Rat).